A 309-amino-acid chain; its full sequence is Olfactory receptor 4B1 (309 aa).

Over 1-23 (MASTSNVTELIFTGLFQDPAVQS) the chain is Extracellular. Residue Asn6 is glycosylated (N-linked (GlcNAc...) asparagine). A helical membrane pass occupies residues 24-47 (VCFVVFLPVYLATVVGNGLIVLTV). Over 48 to 55 (SISKSLDS) the chain is Cytoplasmic. The helical transmembrane segment at 56 to 77 (PMYFFLSCLSLVEISYSSTIAP) threads the bilayer. Residues 78–98 (KFIIDLLAKIKTISLEGCLTQ) lie on the Extracellular side of the membrane. Cys95 and Cys187 are oxidised to a cystine. A helical transmembrane segment spans residues 99–118 (IFFFHFFGVAEILLIVVMAY). Residues 119–137 (DCYVAICKPLHYMNIISRQ) are Cytoplasmic-facing. A helical transmembrane segment spans residues 138 to 156 (LCHLLVAGSWLGGFCHSII). The Extracellular segment spans residues 157 to 193 (QILVIIQLPFCGPNVIDHYFCDLQPLFKLACTDTFME). The helical transmembrane segment at 194-217 (GVIVLANSGLFSVFSFLILVSSYI) threads the bilayer. At 218–233 (VILVNLRNHSAEGRHK) the chain is on the cytoplasmic side. The helical transmembrane segment at 234 to 256 (ALSTCASHITVVILFFGPAIFLY) threads the bilayer. The Extracellular segment spans residues 257–267 (MRPSSTFTEDK). A helical transmembrane segment spans residues 268–287 (LVAVFYTVITPMLNPIIYTL). At 288–309 (RNAEVKIAIRRLWSKKENPGRE) the chain is on the cytoplasmic side.

It belongs to the G-protein coupled receptor 1 family.

Its subcellular location is the cell membrane. Its function is as follows. Odorant receptor. This Homo sapiens (Human) protein is Olfactory receptor 4B1 (OR4B1).